Consider the following 201-residue polypeptide: Cardiotrophin-1 (201 aa).

This sequence belongs to the IL-6 superfamily. Highly expressed in heart, skeletal muscle, prostate and ovary. Lower levels in lung, kidney, pancreas, thymus, testis and small intestine. Little or no expression in brain, placenta, liver, spleen, colon or peripheral blood leukocytes.

It localises to the secreted. Induces cardiac myocyte hypertrophy in vitro. Binds to and activates the ILST/gp130 receptor. This Homo sapiens (Human) protein is Cardiotrophin-1 (CTF1).